The following is a 186-amino-acid chain: uncharacterized protein (186 aa).

Positions 1 to 181 constitute a Macro domain; the sequence is MVSFSYKGNL…TFVSLASDFL (181 aa).

This sequence belongs to the MacroD-type family.

This is an uncharacterized protein from Thermoplasma volcanium (strain ATCC 51530 / DSM 4299 / JCM 9571 / NBRC 15438 / GSS1).